A 388-amino-acid chain; its full sequence is Ferrochelatase (388 aa).

2 residues coordinate Fe cation: His-196 and Glu-277.

The protein belongs to the ferrochelatase family.

The protein resides in the cytoplasm. It catalyses the reaction heme b + 2 H(+) = protoporphyrin IX + Fe(2+). It functions in the pathway porphyrin-containing compound metabolism; protoheme biosynthesis; protoheme from protoporphyrin-IX: step 1/1. Functionally, catalyzes the ferrous insertion into protoporphyrin IX. The chain is Ferrochelatase from Trichormus variabilis (strain ATCC 29413 / PCC 7937) (Anabaena variabilis).